The following is a 229-amino-acid chain: 2-C-methyl-D-erythritol 4-phosphate cytidylyltransferase (229 aa).

It belongs to the IspD/TarI cytidylyltransferase family. IspD subfamily.

It carries out the reaction 2-C-methyl-D-erythritol 4-phosphate + CTP + H(+) = 4-CDP-2-C-methyl-D-erythritol + diphosphate. It functions in the pathway isoprenoid biosynthesis; isopentenyl diphosphate biosynthesis via DXP pathway; isopentenyl diphosphate from 1-deoxy-D-xylulose 5-phosphate: step 2/6. Its function is as follows. Catalyzes the formation of 4-diphosphocytidyl-2-C-methyl-D-erythritol from CTP and 2-C-methyl-D-erythritol 4-phosphate (MEP). The protein is 2-C-methyl-D-erythritol 4-phosphate cytidylyltransferase of Clostridium botulinum (strain Loch Maree / Type A3).